Here is a 185-residue protein sequence, read N- to C-terminus: Orotate phosphoribosyltransferase (185 aa).

5-phospho-alpha-D-ribose 1-diphosphate is bound by residues arginine 98, lysine 99, lysine 102, histidine 104, and glutamate 128–serine 136. Residues threonine 132 and arginine 160 each coordinate orotate.

It belongs to the purine/pyrimidine phosphoribosyltransferase family. PyrE subfamily. As to quaternary structure, homodimer. It depends on Mg(2+) as a cofactor.

It carries out the reaction orotidine 5'-phosphate + diphosphate = orotate + 5-phospho-alpha-D-ribose 1-diphosphate. It functions in the pathway pyrimidine metabolism; UMP biosynthesis via de novo pathway; UMP from orotate: step 1/2. Catalyzes the transfer of a ribosyl phosphate group from 5-phosphoribose 1-diphosphate to orotate, leading to the formation of orotidine monophosphate (OMP). The protein is Orotate phosphoribosyltransferase of Bradyrhizobium sp. (strain ORS 278).